We begin with the raw amino-acid sequence, 288 residues long: Elongation factor Ts (288 aa).

The interval 80–83 (TDFL) is involved in Mg(2+) ion dislocation from EF-Tu.

The protein belongs to the EF-Ts family.

It is found in the cytoplasm. Associates with the EF-Tu.GDP complex and induces the exchange of GDP to GTP. It remains bound to the aminoacyl-tRNA.EF-Tu.GTP complex up to the GTP hydrolysis stage on the ribosome. The chain is Elongation factor Ts from Pseudomonas fluorescens (strain ATCC BAA-477 / NRRL B-23932 / Pf-5).